The sequence spans 96 residues: uncharacterized protein (96 aa).

Essential for virus function. This is an uncharacterized protein from Saccharolobus solfataricus (Sulfolobus solfataricus).